The primary structure comprises 1411 residues: DNA-directed RNA polymerase subunit beta' (1411 aa).

Zn(2+)-binding residues include C70, C72, C85, and C88. Mg(2+) contacts are provided by D458, D460, and D462. Positions 813, 887, 894, and 897 each coordinate Zn(2+). The tract at residues 1391–1411 is disordered; that stretch reads AQAEVPELDGSSVTASDAAAD.

The protein belongs to the RNA polymerase beta' chain family. In terms of assembly, the RNAP catalytic core consists of 2 alpha, 1 beta, 1 beta' and 1 omega subunit. When a sigma factor is associated with the core the holoenzyme is formed, which can initiate transcription. The cofactor is Mg(2+). Requires Zn(2+) as cofactor.

The catalysed reaction is RNA(n) + a ribonucleoside 5'-triphosphate = RNA(n+1) + diphosphate. In terms of biological role, DNA-dependent RNA polymerase catalyzes the transcription of DNA into RNA using the four ribonucleoside triphosphates as substrates. The polypeptide is DNA-directed RNA polymerase subunit beta' (Verminephrobacter eiseniae (strain EF01-2)).